Consider the following 279-residue polypeptide: Thymidylate synthase (279 aa).

Residue 141–142 (RR) coordinates dUMP. Cysteine 161 serves as the catalytic Nucleophile. DUMP is bound by residues 181-184 (RSND), asparagine 192, and 222-224 (HVY). Residue aspartate 184 participates in (6R)-5,10-methylene-5,6,7,8-tetrahydrofolate binding. Alanine 278 serves as a coordination point for (6R)-5,10-methylene-5,6,7,8-tetrahydrofolate.

Belongs to the thymidylate synthase family. Bacterial-type ThyA subfamily. In terms of assembly, homodimer.

It localises to the cytoplasm. The catalysed reaction is dUMP + (6R)-5,10-methylene-5,6,7,8-tetrahydrofolate = 7,8-dihydrofolate + dTMP. Its pathway is pyrimidine metabolism; dTTP biosynthesis. Catalyzes the reductive methylation of 2'-deoxyuridine-5'-monophosphate (dUMP) to 2'-deoxythymidine-5'-monophosphate (dTMP) while utilizing 5,10-methylenetetrahydrofolate (mTHF) as the methyl donor and reductant in the reaction, yielding dihydrofolate (DHF) as a by-product. This enzymatic reaction provides an intracellular de novo source of dTMP, an essential precursor for DNA biosynthesis. This is Thymidylate synthase from Bacillus mojavensis.